The primary structure comprises 175 residues: tRNA-specific adenosine deaminase 2 (175 aa).

Residues 8-133 form the CMP/dCMP-type deaminase domain; sequence EEIQNWMHKA…SVLNVSGDDI (126 aa). His-59 is a Zn(2+) binding site. Glu-61 functions as the Proton donor in the catalytic mechanism. 2 residues coordinate Zn(2+): Cys-95 and Cys-98.

Belongs to the cytidine and deoxycytidylate deaminase family. ADAT2 subfamily. Requires Zn(2+) as cofactor.

The catalysed reaction is adenosine(34) in tRNA + H2O + H(+) = inosine(34) in tRNA + NH4(+). In terms of biological role, probably participates in deamination of adenosine-34 to inosine in many tRNAs. The polypeptide is tRNA-specific adenosine deaminase 2 (adat2) (Xenopus laevis (African clawed frog)).